The following is a 566-amino-acid chain: Beta-1,2-xylosyltransferease XAX1 (566 aa).

The disordered stretch occupies residues 1–25 (MTSTAYSRPSKLPGGGNGSDRRLPP). Over 1-43 (MTSTAYSRPSKLPGGGNGSDRRLPPRLMRGLTTKIEPKKLGVG) the chain is Cytoplasmic. A helical; Signal-anchor for type II membrane protein membrane pass occupies residues 44–64 (LLAGCCLALLTYVSLAKLFAI). The Lumenal segment spans residues 65-566 (YSPVFASTAN…LLQALDRLQQ (502 aa)). Asn74 is a glycosylation site (N-linked (GlcNAc...) asparagine). A disordered region spans residues 78 to 180 (LMQNSPPSSP…AAGGDTKIKC (103 aa)). A compositionally biased stretch (pro residues) spans 84–94 (PSSPETGPIPP). Asn104, Asn368, Asn429, Asn515, and Asn549 each carry an N-linked (GlcNAc...) asparagine glycan.

This sequence belongs to the glycosyltransferase 61 family. As to expression, highly expressed in young panicles.

It is found in the golgi apparatus membrane. It participates in glycan metabolism. Glycosyltransferase involved in the xylosylation of xylan, the major hemicellulose (non-cellulosic component) of primary and secondary walls of angiosperms. Possesses beta-1,2-xylosyltransferase activity, transferring xylose from UDP-xylose to the xylan backbone. This chain is Beta-1,2-xylosyltransferease XAX1, found in Oryza sativa subsp. japonica (Rice).